The chain runs to 412 residues: Serine hydroxymethyltransferase (412 aa).

(6S)-5,6,7,8-tetrahydrofolate is bound by residues leucine 117 and 121–123; that span reads GHL. Lysine 226 carries the post-translational modification N6-(pyridoxal phosphate)lysine. 349-351 lines the (6S)-5,6,7,8-tetrahydrofolate pocket; sequence SPF.

Belongs to the SHMT family. As to quaternary structure, homodimer. The cofactor is pyridoxal 5'-phosphate.

It is found in the cytoplasm. The catalysed reaction is (6R)-5,10-methylene-5,6,7,8-tetrahydrofolate + glycine + H2O = (6S)-5,6,7,8-tetrahydrofolate + L-serine. Its pathway is one-carbon metabolism; tetrahydrofolate interconversion. The protein operates within amino-acid biosynthesis; glycine biosynthesis; glycine from L-serine: step 1/1. In terms of biological role, catalyzes the reversible interconversion of serine and glycine with tetrahydrofolate (THF) serving as the one-carbon carrier. This reaction serves as the major source of one-carbon groups required for the biosynthesis of purines, thymidylate, methionine, and other important biomolecules. Also exhibits THF-independent aldolase activity toward beta-hydroxyamino acids, producing glycine and aldehydes, via a retro-aldol mechanism. The sequence is that of Serine hydroxymethyltransferase from Lawsonia intracellularis (strain PHE/MN1-00).